We begin with the raw amino-acid sequence, 899 residues long: Lipoxygenase 2, chloroplastic (899 aa).

The N-terminal 57 residues, 1 to 57 (MLKPQIHKPHLVNKLPLGTPFIPSHASIASFSTTSLRTLSVQKCYRRYIRYTSSNIK), are a transit peptide targeting the chloroplast. The PLAT domain occupies 83–203 (ALTAVTVGLL…DNPDKRIFFL (121 aa)). Residues 206-899 (SYLPSETPEG…GKGVPYSISI (694 aa)) enclose the Lipoxygenase domain. Residues 252–286 (DPDTDSDMARPVLGGNEHPFPRRCRTGRKMTSTEP) form a disordered region. Fe cation-binding residues include His-557, His-562, His-749, Asn-753, and Ile-899.

It belongs to the lipoxygenase family. Fe cation serves as cofactor. Confined to glandular trichomes in flowers.

Its subcellular location is the plastid. It localises to the chloroplast. It participates in lipid metabolism; oxylipin biosynthesis. In terms of biological role, plant lipoxygenases may be involved in a number of diverse aspects of plant physiology including growth and development, pest resistance, and senescence or responses to wounding. Catalyzes the hydroperoxidation of lipids containing a cis,cis-1,4-pentadiene structure. The chain is Lipoxygenase 2, chloroplastic from Tanacetum cinerariifolium (Dalmatian daisy).